A 166-amino-acid chain; its full sequence is 16S rRNA aminocarboxypropyltransferase (166 aa).

S-adenosyl-L-methionine-binding residues include Thr17, Val62, Ile84, Tyr99, and Ser103.

It belongs to the TDD superfamily. TSR3 family.

It localises to the cytoplasm. It catalyses the reaction an N(1)-methylpseudouridine in rRNA + S-adenosyl-L-methionine = N(1)-methyl-N(3)-[(3S)-3-amino-3-carboxypropyl]pseudouridine in rRNA + S-methyl-5'-thioadenosine + H(+). In terms of biological role, aminocarboxypropyltransferase that catalyzes the aminocarboxypropyl transfer on pseudouridine corresponding to position 914 in M.jannaschii 16S rRNA. It constitutes the last step in biosynthesis of the hypermodified N1-methyl-N3-(3-amino-3-carboxypropyl) pseudouridine (m1acp3-Psi). The protein is 16S rRNA aminocarboxypropyltransferase of Saccharolobus solfataricus (strain ATCC 35092 / DSM 1617 / JCM 11322 / P2) (Sulfolobus solfataricus).